The following is an 816-amino-acid chain: Leucine--tRNA ligase (816 aa).

The 'HIGH' region signature appears at 40-51 (SYPSGAQLHAGH). A 'KMSKS' region motif is present at residues 576–580 (KMSKS). ATP is bound at residue Lys-579.

The protein belongs to the class-I aminoacyl-tRNA synthetase family.

It localises to the cytoplasm. The enzyme catalyses tRNA(Leu) + L-leucine + ATP = L-leucyl-tRNA(Leu) + AMP + diphosphate. The chain is Leucine--tRNA ligase from Clostridium beijerinckii (strain ATCC 51743 / NCIMB 8052) (Clostridium acetobutylicum).